Reading from the N-terminus, the 494-residue chain is Argininosuccinate synthase, chloroplastic (494 aa).

A chloroplast-targeting transit peptide spans 1-73; sequence MAEISATSFP…SRSCKNQAIR (73 aa). Position 74 is an N-acetylalanine (A74). Residues 102 to 110 and A129 contribute to the ATP site; that span reads AYSGGLDTS. L-citrulline is bound by residues Y181 and S186. G211 contributes to the ATP binding site. L-aspartate-binding residues include T213, N217, and D218. N217 serves as a coordination point for L-citrulline. 5 residues coordinate L-citrulline: R221, S270, S279, E355, and Y367.

This sequence belongs to the argininosuccinate synthase family. Type 1 subfamily. As to quaternary structure, homotetramer.

It is found in the plastid. The protein localises to the chloroplast. The catalysed reaction is L-citrulline + L-aspartate + ATP = 2-(N(omega)-L-arginino)succinate + AMP + diphosphate + H(+). It participates in amino-acid biosynthesis; L-arginine biosynthesis; L-arginine from L-ornithine and carbamoyl phosphate: step 2/3. The protein is Argininosuccinate synthase, chloroplastic of Arabidopsis thaliana (Mouse-ear cress).